The sequence spans 215 residues: UPF0502 protein PP_2442 (215 aa).

The protein belongs to the UPF0502 family.

In Pseudomonas putida (strain ATCC 47054 / DSM 6125 / CFBP 8728 / NCIMB 11950 / KT2440), this protein is UPF0502 protein PP_2442.